We begin with the raw amino-acid sequence, 333 residues long: Fructose-1,6-bisphosphatase class 1 1 (333 aa).

Glu-81, Asp-100, Leu-102, and Asp-103 together coordinate Mg(2+). Substrate is bound by residues 103 to 106 and Asn-191; that span reads DGSS. Residue Glu-263 coordinates Mg(2+).

It belongs to the FBPase class 1 family. As to quaternary structure, homotetramer. Requires Mg(2+) as cofactor.

The protein resides in the cytoplasm. It carries out the reaction beta-D-fructose 1,6-bisphosphate + H2O = beta-D-fructose 6-phosphate + phosphate. Its pathway is carbohydrate biosynthesis; Calvin cycle. The sequence is that of Fructose-1,6-bisphosphatase class 1 1 from Cereibacter sphaeroides (strain ATCC 17025 / ATH 2.4.3) (Rhodobacter sphaeroides).